Reading from the N-terminus, the 166-residue chain is Interferon gamma (166 aa).

The N-terminal stretch at 1-23 (MKYTSYILAFQLCIVLGSLGCYC) is a signal peptide. Residue Gln-24 is modified to Pyrrolidone carboxylic acid. Asn-48, Asn-86, and Asn-120 each carry an N-linked (GlcNAc...) asparagine glycan.

Belongs to the type II (or gamma) interferon family. As to quaternary structure, homodimer. Interacts with IFNGR1 (via extracellular domain); this interaction promotes IFNGR1 dimerization. Released primarily from activated T lymphocytes.

It is found in the secreted. Functionally, type II interferon produced by immune cells such as T-cells and NK cells that plays crucial roles in antimicrobial, antiviral, and antitumor responses by activating effector immune cells and enhancing antigen presentation. Primarily signals through the JAK-STAT pathway after interaction with its receptor IFNGR1 to affect gene regulation. Upon IFNG binding, IFNGR1 intracellular domain opens out to allow association of downstream signaling components JAK2, JAK1 and STAT1, leading to STAT1 activation, nuclear translocation and transcription of IFNG-regulated genes. Many of the induced genes are transcription factors such as IRF1 that are able to further drive regulation of a next wave of transcription. Plays a role in class I antigen presentation pathway by inducing a replacement of catalytic proteasome subunits with immunoproteasome subunits. In turn, increases the quantity, quality, and repertoire of peptides for class I MHC loading. Increases the efficiency of peptide generation also by inducing the expression of activator PA28 that associates with the proteasome and alters its proteolytic cleavage preference. Up-regulates as well MHC II complexes on the cell surface by promoting expression of several key molecules such as cathepsins B/CTSB, H/CTSH, and L/CTSL. Participates in the regulation of hematopoietic stem cells during development and under homeostatic conditions by affecting their development, quiescence, and differentiation. In Saimiri sciureus (Common squirrel monkey), this protein is Interferon gamma (IFNG).